Consider the following 90-residue polypeptide: Small ribosomal subunit protein uS15 (90 aa).

It belongs to the universal ribosomal protein uS15 family. In terms of assembly, part of the 30S ribosomal subunit. Forms a bridge to the 50S subunit in the 70S ribosome, contacting the 23S rRNA.

Functionally, one of the primary rRNA binding proteins, it binds directly to 16S rRNA where it helps nucleate assembly of the platform of the 30S subunit by binding and bridging several RNA helices of the 16S rRNA. Its function is as follows. Forms an intersubunit bridge (bridge B4) with the 23S rRNA of the 50S subunit in the ribosome. The polypeptide is Small ribosomal subunit protein uS15 (Helicobacter pylori (strain HPAG1)).